The chain runs to 481 residues: Multiple inositol polyphosphate phosphatase 1 (481 aa).

The N-terminal stretch at 1–30 (MLRGARSHLPASVAPAAVLAAALLSSFARC) is a signal peptide. Histidine 89 is a catalytic residue. Residues asparagine 236 and asparagine 475 are each glycosylated (N-linked (GlcNAc...) asparagine). Positions 478–481 (SDEL) match the Prevents secretion from ER motif.

Belongs to the histidine acid phosphatase family. MINPP1 subfamily. N-glycosylated. In terms of tissue distribution, widely expressed with highest levels in kidney, intestine, thymus and liver.

It localises to the endoplasmic reticulum lumen. The protein resides in the secreted. Its subcellular location is the cell membrane. The enzyme catalyses 1D-myo-inositol hexakisphosphate + H2O = 1D-myo-inositol 1,2,4,5,6-pentakisphosphate + phosphate. The catalysed reaction is 1D-myo-inositol 1,2,4,5,6-pentakisphosphate + H2O = 1D-myo-inositol 1,2,5,6-tetrakisphosphate + phosphate. It catalyses the reaction 1D-myo-inositol 1,2,5,6-tetrakisphosphate + H2O = 1D-myo-inositol 1,2,6-trisphosphate + phosphate. It carries out the reaction 1D-myo-inositol 1,2,6-trisphosphate + H2O = 1D-myo-inositol 1,2-bisphosphate + phosphate. The enzyme catalyses 1D-myo-inositol 1,2-bisphosphate + H2O = 1D-myo-inositol 2-phosphate + phosphate. The catalysed reaction is 1D-myo-inositol hexakisphosphate + H2O = 1D-myo-inositol 1,2,3,5,6-pentakisphosphate + phosphate. It catalyses the reaction 1D-myo-inositol 1,2,3,5,6-pentakisphosphate + H2O = 1D-myo-inositol 1,2,3,6-tetrakisphosphate + phosphate. It carries out the reaction 1D-myo-inositol 1,2,3,6-tetrakisphosphate + H2O = 1D-myo-inositol 1,2,3-trisphosphate + phosphate. The enzyme catalyses 1D-myo-inositol 1,2,3-trisphosphate + H2O = 1D-myo-inositol 2,3-bisphosphate + phosphate. The catalysed reaction is 1D-myo-inositol 2,3-bisphosphate + H2O = 1D-myo-inositol 2-phosphate + phosphate. It catalyses the reaction 1D-myo-inositol 1,3,4,5,6-pentakisphosphate + H2O = 1D-myo-inositol 1,4,5,6-tetrakisphosphate + phosphate. It carries out the reaction 1D-myo-inositol 1,4,5,6-tetrakisphosphate + H2O = 1D-myo-inositol 1,4,5-trisphosphate + phosphate. The enzyme catalyses (2R)-2,3-bisphosphoglycerate + H2O = (2R)-2-phosphoglycerate + phosphate. Its function is as follows. Multiple inositol polyphosphate phosphatase that hydrolyzes 1D-myo-inositol 1,3,4,5,6-pentakisphosphate (InsP5[2OH]) and 1D-myo-inositol hexakisphosphate (InsP6) to a range of less phosphorylated inositol phosphates. This regulates the availability of these various small molecule second messengers and metal chelators which control many aspects of cell physiology. Has a weak in vitro activity towards 1D-myo-inositol 1,4,5-trisphosphate which is unlikely to be physiologically relevant. By regulating intracellular inositol polyphosphates pools, which act as metal chelators, it may control the availability of intracellular calcium and iron, which are important for proper neuronal development and homeostasis. May have a dual substrate specificity, and function as a 2,3-bisphosphoglycerate 3-phosphatase hydrolyzing 2,3-bisphosphoglycerate to 2-phosphoglycerate. 2,3-bisphosphoglycerate (BPG) is formed as part of the Rapoport-Luebering glycolytic bypass and is a regulator of systemic oxygen homeostasis as the major allosteric effector of hemoglobin. The chain is Multiple inositol polyphosphate phosphatase 1 from Mus musculus (Mouse).